Reading from the N-terminus, the 516-residue chain is GMP synthase [glutamine-hydrolyzing] (516 aa).

One can recognise a Glutamine amidotransferase type-1 domain in the interval 8–198 (KILILDFGSQ…VVNICGCDTL (191 aa)). Cysteine 84 acts as the Nucleophile in catalysis. Active-site residues include histidine 172 and glutamate 174. A GMPS ATP-PPase domain is found at 199-391 (WNIENIIEND…LGLPYNMLYR (193 aa)). 226–232 (SGGVDSS) serves as a coordination point for ATP.

In terms of assembly, homodimer.

It carries out the reaction XMP + L-glutamine + ATP + H2O = GMP + L-glutamate + AMP + diphosphate + 2 H(+). The protein operates within purine metabolism; GMP biosynthesis; GMP from XMP (L-Gln route): step 1/1. In terms of biological role, catalyzes the synthesis of GMP from XMP. The polypeptide is GMP synthase [glutamine-hydrolyzing] (Francisella tularensis subsp. holarctica (strain FTNF002-00 / FTA)).